The chain runs to 236 residues: Potassium/proton antiporter CemA (236 aa).

Transmembrane regions (helical) follow at residues 18 to 38 (YIIS…FLVL), 114 to 134 (IAHV…LINA), 161 to 181 (LILF…KILI), and 196 to 216 (FIFL…KYWI).

This sequence belongs to the CemA family.

The protein localises to the plastid. It is found in the chloroplast inner membrane. The enzyme catalyses K(+)(in) + H(+)(out) = K(+)(out) + H(+)(in). Its function is as follows. Contributes to K(+)/H(+) antiport activity by supporting proton efflux to control proton extrusion and homeostasis in chloroplasts in a light-dependent manner to modulate photosynthesis. Prevents excessive induction of non-photochemical quenching (NPQ) under continuous-light conditions. Indirectly promotes efficient inorganic carbon uptake into chloroplasts. This Mesostigma viride (Green alga) protein is Potassium/proton antiporter CemA.